A 203-amino-acid polypeptide reads, in one-letter code: DNA-directed RNA polymerase III subunit rpc8 (203 aa).

Belongs to the eukaryotic RPB7/RPC8 RNA polymerase subunit family. In terms of assembly, component of the RNA polymerase III (Pol III) complex consisting of 17 subunits. Rpc25/rpc8 and rpc17/rpc9 form a Pol III subcomplex.

Its subcellular location is the cytoplasm. It localises to the nucleus. DNA-dependent RNA polymerase catalyzes the transcription of DNA into RNA using the four ribonucleoside triphosphates as substrates. Specific peripheric component of RNA polymerase III which synthesizes small RNAs, such as 5S rRNA and tRNA. This is DNA-directed RNA polymerase III subunit rpc8 (rpc25) from Schizosaccharomyces pombe (strain 972 / ATCC 24843) (Fission yeast).